The following is a 244-amino-acid chain: Vesicle-associated membrane protein-associated protein SCS2 (244 aa).

S2 carries the post-translational modification N-acetylserine. Topologically, residues 2-222 (SAVEISPDVL…EAATVPAENE (221 aa)) are cytoplasmic. One can recognise an MSP domain in the interval 3 to 126 (AVEISPDVLV…ISKKIKVKYL (124 aa)). S106 bears the Phosphoserine mark. The tract at residues 135-219 (QNQNIQENKE…QIKEAATVPA (85 aa)) is disordered. A compositionally biased stretch (basic and acidic residues) spans 153–168 (SEPKEVPAVVNEKEVP). Over residues 199–211 (QTSNSTPAPQNQI) the composition is skewed to polar residues. The helical; Anchor for type IV membrane protein transmembrane segment at 223-243 (SSSMGIFILVALLILVLGWFY) threads the bilayer. Residue R244 is a topological domain, lumenal.

The protein belongs to the VAMP-associated protein (VAP) (TC 9.B.17) family. In terms of assembly, interacts with OPI1. Also interacts with PBI1. Interacts with EPO1.

The protein localises to the endoplasmic reticulum membrane. It is found in the nucleus membrane. Acts as an endoplasmic reticulum (ER) membrane anchor for cytoplasmic proteins via binding to the FFAT motif of targeted proteins. Regulates phospholipid biosynthesis by modulating the subcellular localization of the transcriptional repressor OPI1. Also contributes to the tethering of the ER to the plasma membrane. Allows interorganelle phosphatidylserine (PtdSer) transport via a process that involves the acceptor membrane complex PDR17-PDS2 that binds to PBI1 which in turn ligates to SCS2 and phosphatidic acid present in the donor membrane, forming a zone of apposition that facilitates PtdSer transfer. The sequence is that of Vesicle-associated membrane protein-associated protein SCS2 from Saccharomyces cerevisiae (strain ATCC 204508 / S288c) (Baker's yeast).